An 88-amino-acid polypeptide reads, in one-letter code: MAEAEKTVRTLTGRVVSDKMDKTITVLIERRVKHPIYGKYVKRSTKLHAHDEANQCKIGDKVSIRETRPLAKTKSWALVEVLERAVEV.

The protein belongs to the universal ribosomal protein uS17 family. In terms of assembly, part of the 30S ribosomal subunit.

Functionally, one of the primary rRNA binding proteins, it binds specifically to the 5'-end of 16S ribosomal RNA. This Pseudomonas putida (strain ATCC 700007 / DSM 6899 / JCM 31910 / BCRC 17059 / LMG 24140 / F1) protein is Small ribosomal subunit protein uS17.